The following is a 286-amino-acid chain: uncharacterized protein (286 aa).

An AB hydrolase-1 domain is found at 26-268 (PLIILCHGFC…DACHYDIYEG (243 aa)).

To E.coli YcjY.

This is an uncharacterized protein from Escherichia coli.